A 429-amino-acid polypeptide reads, in one-letter code: Carboxypeptidase B (429 aa).

The N-terminal stretch at 1-15 (MKFLLVLALCAVVYA) is a signal peptide. A Peptidase M14 domain is found at 121-423 (NYQELEVIDE…EGIVVGARRA (303 aa)). 2 residues coordinate Zn(2+): His182 and Glu185. Residues 182–185 (HARE), Arg236, and 256–257 (NR) each bind substrate. A disulfide bond links Cys250 and Cys273. His309 contacts Zn(2+). Substrate is bound by residues 310–311 (SF) and Tyr365. Glu387 functions as the Proton donor/acceptor in the catalytic mechanism.

This sequence belongs to the peptidase M14 family. Zn(2+) serves as cofactor.

Its subcellular location is the secreted. It carries out the reaction Preferential release of a C-terminal lysine or arginine amino acid.. Its activity is regulated as follows. Highly resistant to inhibition by potato carboxypeptidase inhibitor (PCI). Moderately inhibited by leech carboxypeptidase inhibitor (LCI) and tick carboxypeptidase inhibitor (TCI). Its function is as follows. Metalloprotease which cleaves a single amino acid from the C-terminal end of polypeptide chains. Shows a strong preference for peptides with a terminal lysine residue. This is Carboxypeptidase B from Helicoverpa zea (Corn earworm moth).